Consider the following 198-residue polypeptide: MQPTPSQHPVGAQPLIARPATGIIDPNTGRPVGADDPFFLNVNRELSDKGFFVAATDDLITWARTGSLMWMTFGLACCAVEMMQLSMPRYDAERFGFAPRASPRQSDVMIVAGTLTNKMAPALRKVYDQMPEPRYVISMGSCANGGGYYHYSYSVVRGCDRIVPIDIYVPGCPPTAEALLYGVMLLQKKIRRTGTIER.

[4Fe-4S] cluster contacts are provided by Cys-77, Cys-78, Cys-142, and Cys-172.

Belongs to the complex I 20 kDa subunit family. NDH-1 is composed of 14 different subunits. Subunits NuoB, C, D, E, F, and G constitute the peripheral sector of the complex. It depends on [4Fe-4S] cluster as a cofactor.

Its subcellular location is the cell inner membrane. The catalysed reaction is a quinone + NADH + 5 H(+)(in) = a quinol + NAD(+) + 4 H(+)(out). Functionally, NDH-1 shuttles electrons from NADH, via FMN and iron-sulfur (Fe-S) centers, to quinones in the respiratory chain. The immediate electron acceptor for the enzyme in this species is believed to be ubiquinone. Couples the redox reaction to proton translocation (for every two electrons transferred, four hydrogen ions are translocated across the cytoplasmic membrane), and thus conserves the redox energy in a proton gradient. The polypeptide is NADH-quinone oxidoreductase subunit B 1 (Rhodopseudomonas palustris (strain ATCC BAA-98 / CGA009)).